The primary structure comprises 153 residues: UPF0266 membrane protein SG1324 (153 aa).

Transmembrane regions (helical) follow at residues 6–26, 46–66, and 68–88; these read IGLVIMIVIALLFAVFDEFIV, LDGLIFIVLLLILLYKNITTD, and KVMTSTLILFLGLMVIYLAYI.

It belongs to the UPF0266 family.

It localises to the cell inner membrane. The protein is UPF0266 membrane protein SG1324 of Sodalis glossinidius (strain morsitans).